We begin with the raw amino-acid sequence, 506 residues long: Maturase K (506 aa).

Belongs to the intron maturase 2 family. MatK subfamily.

Its subcellular location is the plastid. It localises to the chloroplast. Its function is as follows. Usually encoded in the trnK tRNA gene intron. Probably assists in splicing its own and other chloroplast group II introns. This chain is Maturase K, found in Trifolium wormskioldii (Cows clover).